A 367-amino-acid polypeptide reads, in one-letter code: Peptide chain release factor 2 (367 aa).

Gln-254 bears the N5-methylglutamine mark.

Belongs to the prokaryotic/mitochondrial release factor family. Methylated by PrmC. Methylation increases the termination efficiency of RF2.

It localises to the cytoplasm. Its function is as follows. Peptide chain release factor 2 directs the termination of translation in response to the peptide chain termination codons UGA and UAA. The chain is Peptide chain release factor 2 from Aromatoleum aromaticum (strain DSM 19018 / LMG 30748 / EbN1) (Azoarcus sp. (strain EbN1)).